A 124-amino-acid chain; its full sequence is Glutaredoxin-2 (124 aa).

An intrachain disulfide couples Cys13 to Cys16.

This sequence belongs to the glutaredoxin family. As to quaternary structure, homodimer.

The protein localises to the host cytoplasm. In terms of biological role, glutaredoxin necessary for virion morphogenesis and virus replication. Functions as a thiol-disulfide transfer protein between membrane-associated OPG128 and substrates OPG095 or OPG053. The complete pathway for formation of disulfide bonds in intracellular virion membrane proteins sequentially involves oxidation of OPG072, OPG128 and OPG088. Exhibit thioltransferase and dehydroascorbate reductase activities in vitro. This is Glutaredoxin-2 (OPG088) from Mus musculus (Mouse).